The chain runs to 458 residues: ATP synthase subunit beta (458 aa).

148-155 serves as a coordination point for ATP; the sequence is GGAGVGKT.

Belongs to the ATPase alpha/beta chains family. In terms of assembly, F-type ATPases have 2 components, CF(1) - the catalytic core - and CF(0) - the membrane proton channel. CF(1) has five subunits: alpha(3), beta(3), gamma(1), delta(1), epsilon(1). CF(0) has three main subunits: a(1), b(2) and c(9-12). The alpha and beta chains form an alternating ring which encloses part of the gamma chain. CF(1) is attached to CF(0) by a central stalk formed by the gamma and epsilon chains, while a peripheral stalk is formed by the delta and b chains.

Its subcellular location is the cell inner membrane. The enzyme catalyses ATP + H2O + 4 H(+)(in) = ADP + phosphate + 5 H(+)(out). In terms of biological role, produces ATP from ADP in the presence of a proton gradient across the membrane. The catalytic sites are hosted primarily by the beta subunits. The polypeptide is ATP synthase subunit beta (Legionella pneumophila (strain Paris)).